The chain runs to 143 residues: Transcriptional regulator MraZ (143 aa).

SpoVT-AbrB domains are found at residues 5-47 and 76-119; these read SHAP…PMAE and AADD…DAQR.

Belongs to the MraZ family. In terms of assembly, forms oligomers.

It localises to the cytoplasm. Its subcellular location is the nucleoid. The chain is Transcriptional regulator MraZ from Frankia casuarinae (strain DSM 45818 / CECT 9043 / HFP020203 / CcI3).